Reading from the N-terminus, the 145-residue chain is Protein FAM216B (145 aa).

The interval 92–121 is disordered; sequence TKRASAKAGPHRTVPQRAAGRTRTQPSARP.

It belongs to the FAM216 family.

This is Protein FAM216B (FAM216B) from Bos taurus (Bovine).